The primary structure comprises 366 residues: tRNA/tmRNA (uracil-C(5))-methyltransferase (366 aa).

The S-adenosyl-L-methionine site is built by Gln-189, Tyr-217, Asn-222, Glu-238, and Asp-298. The active-site Nucleophile is Cys-323. The active-site Proton acceptor is Glu-357.

The protein belongs to the class I-like SAM-binding methyltransferase superfamily. RNA M5U methyltransferase family. TrmA subfamily.

The enzyme catalyses uridine(54) in tRNA + S-adenosyl-L-methionine = 5-methyluridine(54) in tRNA + S-adenosyl-L-homocysteine + H(+). The catalysed reaction is uridine(341) in tmRNA + S-adenosyl-L-methionine = 5-methyluridine(341) in tmRNA + S-adenosyl-L-homocysteine + H(+). Functionally, dual-specificity methyltransferase that catalyzes the formation of 5-methyluridine at position 54 (m5U54) in all tRNAs, and that of position 341 (m5U341) in tmRNA (transfer-mRNA). This is tRNA/tmRNA (uracil-C(5))-methyltransferase from Idiomarina loihiensis (strain ATCC BAA-735 / DSM 15497 / L2-TR).